The primary structure comprises 113 residues: Putative pterin-4-alpha-carbinolamine dehydratase (113 aa).

It belongs to the pterin-4-alpha-carbinolamine dehydratase family.

The enzyme catalyses (4aS,6R)-4a-hydroxy-L-erythro-5,6,7,8-tetrahydrobiopterin = (6R)-L-erythro-6,7-dihydrobiopterin + H2O. The polypeptide is Putative pterin-4-alpha-carbinolamine dehydratase (Legionella pneumophila (strain Paris)).